A 50-amino-acid polypeptide reads, in one-letter code: Large ribosomal subunit protein eL39 (50 aa).

The segment covering 1 to 12 has biased composition (basic residues); it reads MGKKSKASKKRL. 2 disordered regions span residues 1-20 and 30-50; these read MGKK…RQNS and TNRD…DTDE.

The protein belongs to the eukaryotic ribosomal protein eL39 family.

This is Large ribosomal subunit protein eL39 (rpl39e) from Halobacterium salinarum (strain ATCC 700922 / JCM 11081 / NRC-1) (Halobacterium halobium).